Here is a 449-residue protein sequence, read N- to C-terminus: Chromosomal replication initiator protein DnaA (449 aa).

The segment at 1-73 is domain I, interacts with DnaA modulators; it reads MTQNPQWLWQ…TETIAELLQQ (73 aa). The tract at residues 73 to 109 is domain II; sequence QPVKVRLTSPEGNTLAATQSFYSSRSGQSTRPGKKTP. Positions 90–103 are enriched in polar residues; that stretch reads TQSFYSSRSGQSTR. Positions 90-110 are disordered; sequence TQSFYSSRSGQSTRPGKKTPE. Residues 110-326 form a domain III, AAA+ region region; it reads ELNSKYTFSR…GALLRAVTHI (217 aa). The ATP site is built by G154, G156, K157, and T158. The interval 327-449 is domain IV, binds dsDNA; it reads AISGLPMTVE…DRINHHHQNL (123 aa).

It belongs to the DnaA family. As to quaternary structure, oligomerizes as a right-handed, spiral filament on DNA at oriC.

It localises to the cytoplasm. Its function is as follows. Plays an essential role in the initiation and regulation of chromosomal replication. ATP-DnaA binds to the origin of replication (oriC) to initiate formation of the DNA replication initiation complex once per cell cycle. Binds the DnaA box (a 9 base pair repeat at the origin) and separates the double-stranded (ds)DNA. Forms a right-handed helical filament on oriC DNA; dsDNA binds to the exterior of the filament while single-stranded (ss)DNA is stabiized in the filament's interior. The ATP-DnaA-oriC complex binds and stabilizes one strand of the AT-rich DNA unwinding element (DUE), permitting loading of DNA polymerase. After initiation quickly degrades to an ADP-DnaA complex that is not apt for DNA replication. Binds acidic phospholipids. The polypeptide is Chromosomal replication initiator protein DnaA (Picosynechococcus sp. (strain ATCC 27264 / PCC 7002 / PR-6) (Agmenellum quadruplicatum)).